The sequence spans 293 residues: Pyridoxal 5'-phosphate synthase subunit PdxS (293 aa).

Residue Asp-23 coordinates D-ribose 5-phosphate. Lys-80 (schiff-base intermediate with D-ribose 5-phosphate) is an active-site residue. Gly-152 lines the D-ribose 5-phosphate pocket. Arg-164 is a binding site for D-glyceraldehyde 3-phosphate. Residues Gly-213 and 234–235 (GS) each bind D-ribose 5-phosphate.

It belongs to the PdxS/SNZ family. In terms of assembly, in the presence of PdxT, forms a dodecamer of heterodimers.

The catalysed reaction is aldehydo-D-ribose 5-phosphate + D-glyceraldehyde 3-phosphate + L-glutamine = pyridoxal 5'-phosphate + L-glutamate + phosphate + 3 H2O + H(+). Its pathway is cofactor biosynthesis; pyridoxal 5'-phosphate biosynthesis. Its function is as follows. Catalyzes the formation of pyridoxal 5'-phosphate from ribose 5-phosphate (RBP), glyceraldehyde 3-phosphate (G3P) and ammonia. The ammonia is provided by the PdxT subunit. Can also use ribulose 5-phosphate and dihydroxyacetone phosphate as substrates, resulting from enzyme-catalyzed isomerization of RBP and G3P, respectively. The chain is Pyridoxal 5'-phosphate synthase subunit PdxS from Thermus thermophilus (strain ATCC 27634 / DSM 579 / HB8).